A 315-amino-acid chain; its full sequence is MVTSMLPAGLVASAVVSASSANLGPGFDSIGLALSLIDEITVETTDSGLVVQVEGEGADQVPLGPEHLVVRAVECGLRAVGVRAAGLVVRCRNAIPHSRGLGSSAAAVVGGLAAANGLVAQANCQPLSDAALIQLSSEFEGHPDNAAAAVFGGAIVSWIDRGGQHPRYAAAPLRLHPDIHLYCAIPQERSLTAETRVLLPAQVSHEDARFNVSRAALLVVALTERPDLLMAATEDVLHQPQRAPAMPASAEYLRLLRRHNVAATLSGAGPSLIALTTASALPPEVMEYGAANGFTLAEMTAGEGVRWSPGVTVVG.

96 to 106 serves as a coordination point for ATP; that stretch reads PHSRGLGSSAA.

It belongs to the GHMP kinase family. Homoserine kinase subfamily.

The protein localises to the cytoplasm. The catalysed reaction is L-homoserine + ATP = O-phospho-L-homoserine + ADP + H(+). Its pathway is amino-acid biosynthesis; L-threonine biosynthesis; L-threonine from L-aspartate: step 4/5. Functionally, catalyzes the ATP-dependent phosphorylation of L-homoserine to L-homoserine phosphate. This is Homoserine kinase from Mycolicibacterium paratuberculosis (strain ATCC BAA-968 / K-10) (Mycobacterium paratuberculosis).